The primary structure comprises 233 residues: MKIFAIQLQPLDDKNARKQIEQLKPFVSFEKRAAAERFRFLIDARRTLLGEVLIRHIIHEMYALPMEQIIFETEGNGKPVVRQIPSFHFNLSHSGDWVVGAVDDAPVGIDIEEIKPIDLAIAERFFSADEYQDLLSQPAERQEAYFFHLWSMKEAFIKLTGKGISYGLSSFTARLSEDGQATLRLPDHEAPCVVQTYSLDPAYQMAVCTRKPAAAEHVEILTCENMLSRLNNV.

Positions 110, 112, and 154 each coordinate Mg(2+). A peptidyl carrier protein binding region spans residues 161–192 (GKGISYGLSSFTARLSEDGQATLRLPDHEAPC).

This sequence belongs to the P-Pant transferase superfamily. Gsp/Sfp/HetI/AcpT family. Mg(2+) serves as cofactor.

The enzyme catalyses apo-[peptidyl-carrier protein] + CoA = holo-[peptidyl-carrier protein] + adenosine 3',5'-bisphosphate + H(+). Its function is as follows. Probably activates the peptidyl carrier protein (PCP) domains of surfactin synthetase by transferring the 4'-phosphopantetheinyl moiety of coenzyme A (CoA) to a serine residue. Required for the production of the lipopeptide antibiotic, surfactin. This Bacillus pumilus (Bacillus mesentericus) protein is 4'-phosphopantetheinyl transferase psf-1 (psf-1).